The sequence spans 242 residues: MTKLFIPYIMGNKDLIENATLLSENGADIIEIGVPFSDPVADGPVIMEAGQQAIKQGITIDYIFNQLEKHGDQIKCNYVLMTYYNIICHYGEQAFFEKCRDTGVYGLIIPDLPYELSQRLKQQFSHYGVKIISLVAMTTDDKRIKDIVSHAEGFIYTVTMNATTGQNGAFHPELKRKIESIKAIANVPVVAGFGIRTPQHVADIKEVADGIVIGSEIVKRFKSNTREEIIKYLQSIQQTLNN.

Residues Glu31 and Asp42 each act as proton acceptor in the active site.

The protein belongs to the TrpA family. In terms of assembly, tetramer of two alpha and two beta chains.

It catalyses the reaction (1S,2R)-1-C-(indol-3-yl)glycerol 3-phosphate + L-serine = D-glyceraldehyde 3-phosphate + L-tryptophan + H2O. It functions in the pathway amino-acid biosynthesis; L-tryptophan biosynthesis; L-tryptophan from chorismate: step 5/5. The alpha subunit is responsible for the aldol cleavage of indoleglycerol phosphate to indole and glyceraldehyde 3-phosphate. This chain is Tryptophan synthase alpha chain, found in Staphylococcus aureus (strain USA300).